Reading from the N-terminus, the 430-residue chain is Glucose-6-phosphate isomerase (430 aa).

The Proton donor role is filled by Glu284. Catalysis depends on residues His305 and Lys420.

This sequence belongs to the GPI family.

It localises to the cytoplasm. The catalysed reaction is alpha-D-glucose 6-phosphate = beta-D-fructose 6-phosphate. It participates in carbohydrate biosynthesis; gluconeogenesis. Its pathway is carbohydrate degradation; glycolysis; D-glyceraldehyde 3-phosphate and glycerone phosphate from D-glucose: step 2/4. Its function is as follows. Catalyzes the reversible isomerization of glucose-6-phosphate to fructose-6-phosphate. This chain is Glucose-6-phosphate isomerase, found in Mycoplasmopsis synoviae (strain 53) (Mycoplasma synoviae).